The primary structure comprises 244 residues: MSDTPQSPAQDSLAEHDEARPMRTVKSFVMRAGRMTEGQQRGLDLGWPKFGLELSDEVQDFDAIFGRQAPRTFEIGFGMGHSTLEMAAAAPDLDFIGVEVHKPGVGALLNGLLTQGLGNVRVYSCDALEVLRHCVADASLDRLLLFFPDPWHKKRHHKRRIVQPEFAELVRRKLKVGGVLHMATDWEPYAEHMLDVMSAAPGYRNQAEDGRFVPRPQERPVTKFERRGERLGHGVWDLKFERVD.

Residues 1–10 (MSDTPQSPAQ) are compositionally biased toward polar residues. A disordered region spans residues 1-20 (MSDTPQSPAQDSLAEHDEAR). S-adenosyl-L-methionine is bound by residues E74, E99, D126, and D149. D149 is a catalytic residue. Residues K153, D185, and 222–225 (TKFE) contribute to the substrate site.

The protein belongs to the class I-like SAM-binding methyltransferase superfamily. TrmB family.

It carries out the reaction guanosine(46) in tRNA + S-adenosyl-L-methionine = N(7)-methylguanosine(46) in tRNA + S-adenosyl-L-homocysteine. Its pathway is tRNA modification; N(7)-methylguanine-tRNA biosynthesis. Functionally, catalyzes the formation of N(7)-methylguanine at position 46 (m7G46) in tRNA. The polypeptide is tRNA (guanine-N(7)-)-methyltransferase (Pseudomonas paraeruginosa (strain DSM 24068 / PA7) (Pseudomonas aeruginosa (strain PA7))).